The chain runs to 287 residues: MAASAHAPTASEYIVHHLQHLQNVPQTKIVDFSVVNYDSMVLALLLGGLTLLILWTAARKASCGVPGRLQAAVEILVEMVDNQAKANIHNAESRKFIAPLGLVVFVWVFLMNAMDMVPVDLLPSIWGQIRQDSHEPLRVVPTADLSTTMGLALAVLGLRFWYSLKIKGAGGWAHELVSAPFGTSKNPLFALILGLVNLLMQVIEYVANTVSHGMRLFGNMYAGELVFMLIALMGGAAALSLSGVLLPVGHVIAGTLWTLFHILVITLQAFIFMMLALIYLGQAHNAH.

Transmembrane regions (helical) follow at residues 38 to 58 (DSMV…WTAA), 96 to 116 (FIAP…AMDM), 139 to 161 (VVPT…LRFW), 187 to 207 (PLFA…EYVA), 225 to 245 (LVFM…SGVL), and 259 to 279 (LFHI…ALIY).

Belongs to the ATPase A chain family. In terms of assembly, F-type ATPases have 2 components, CF(1) - the catalytic core - and CF(0) - the membrane proton channel. CF(1) has five subunits: alpha(3), beta(3), gamma(1), delta(1), epsilon(1). CF(0) has three main subunits: a(1), b(2) and c(9-12). The alpha and beta chains form an alternating ring which encloses part of the gamma chain. CF(1) is attached to CF(0) by a central stalk formed by the gamma and epsilon chains, while a peripheral stalk is formed by the delta and b chains.

It is found in the cell inner membrane. Key component of the proton channel; it plays a direct role in the translocation of protons across the membrane. This is ATP synthase subunit a from Verminephrobacter eiseniae (strain EF01-2).